The sequence spans 217 residues: Large ribosomal subunit protein uL1 (217 aa).

It belongs to the universal ribosomal protein uL1 family.

This Drosophila melanogaster (Fruit fly) protein is Large ribosomal subunit protein uL1 (RpL10Ab).